The chain runs to 156 residues: 3-hydroxyacyl-[acyl-carrier-protein] dehydratase FabZ (156 aa).

His57 is a catalytic residue.

It belongs to the thioester dehydratase family. FabZ subfamily.

The protein localises to the cytoplasm. The enzyme catalyses a (3R)-hydroxyacyl-[ACP] = a (2E)-enoyl-[ACP] + H2O. In terms of biological role, involved in unsaturated fatty acids biosynthesis. Catalyzes the dehydration of short chain beta-hydroxyacyl-ACPs and long chain saturated and unsaturated beta-hydroxyacyl-ACPs. The protein is 3-hydroxyacyl-[acyl-carrier-protein] dehydratase FabZ of Anaeromyxobacter dehalogenans (strain 2CP-1 / ATCC BAA-258).